A 146-amino-acid chain; its full sequence is Large ribosomal subunit protein uL13 (146 aa).

This sequence belongs to the universal ribosomal protein uL13 family. In terms of assembly, part of the 50S ribosomal subunit.

Functionally, this protein is one of the early assembly proteins of the 50S ribosomal subunit, although it is not seen to bind rRNA by itself. It is important during the early stages of 50S assembly. The protein is Large ribosomal subunit protein uL13 of Mycoplasma pneumoniae (strain ATCC 29342 / M129 / Subtype 1) (Mycoplasmoides pneumoniae).